Reading from the N-terminus, the 129-residue chain is Phosphoribosyl-AMP cyclohydrolase (129 aa).

Aspartate 76 serves as a coordination point for Mg(2+). Cysteine 77 contacts Zn(2+). Positions 78 and 80 each coordinate Mg(2+). Zn(2+)-binding residues include cysteine 97 and cysteine 104.

It belongs to the PRA-CH family. In terms of assembly, homodimer. Mg(2+) serves as cofactor. Requires Zn(2+) as cofactor.

The protein localises to the cytoplasm. It carries out the reaction 1-(5-phospho-beta-D-ribosyl)-5'-AMP + H2O = 1-(5-phospho-beta-D-ribosyl)-5-[(5-phospho-beta-D-ribosylamino)methylideneamino]imidazole-4-carboxamide. It functions in the pathway amino-acid biosynthesis; L-histidine biosynthesis; L-histidine from 5-phospho-alpha-D-ribose 1-diphosphate: step 3/9. Its function is as follows. Catalyzes the hydrolysis of the adenine ring of phosphoribosyl-AMP. The protein is Phosphoribosyl-AMP cyclohydrolase of Albidiferax ferrireducens (strain ATCC BAA-621 / DSM 15236 / T118) (Rhodoferax ferrireducens).